The following is a 152-amino-acid chain: Large ribosomal subunit protein uL15 (152 aa).

The protein belongs to the universal ribosomal protein uL15 family. Part of the 50S ribosomal subunit.

Functionally, binds to the 23S rRNA. In Staphylothermus marinus (strain ATCC 43588 / DSM 3639 / JCM 9404 / F1), this protein is Large ribosomal subunit protein uL15.